Reading from the N-terminus, the 863-residue chain is Leucine--tRNA ligase (863 aa).

Positions 42 to 52 match the 'HIGH' region motif; sequence PYPSGKLHMGH. A 'KMSKS' region motif is present at residues 623–627; that stretch reads KMSKS. Residue K626 coordinates ATP.

This sequence belongs to the class-I aminoacyl-tRNA synthetase family.

The protein localises to the cytoplasm. It carries out the reaction tRNA(Leu) + L-leucine + ATP = L-leucyl-tRNA(Leu) + AMP + diphosphate. This Paraburkholderia xenovorans (strain LB400) protein is Leucine--tRNA ligase.